We begin with the raw amino-acid sequence, 379 residues long: Lactosylceramide 1,3-N-acetyl-beta-D-glucosaminyltransferase A (379 aa).

Residues 1–12 (MFMNCRRVKKWH) lie on the Cytoplasmic side of the membrane. Residues 13–30 (FLQLLSMCCVMSVLMVCW) form a helical; Signal-anchor for type II membrane protein membrane-spanning segment. Residues 31–379 (EHVDHHVVSH…NTYSCMAAFT (349 aa)) lie on the Lumenal side of the membrane. Asn-57, Asn-113, Asn-168, and Asn-277 each carry an N-linked (GlcNAc...) asparagine glycan.

Belongs to the glycosyltransferase 31 family.

It is found in the golgi apparatus membrane. It catalyses the reaction a beta-D-Gal-(1-&gt;4)-beta-D-Glc-(1&lt;-&gt;1)-Cer(d18:1(4E)) + UDP-N-acetyl-alpha-D-glucosamine = a beta-D-GlcNAc-(1-&gt;3)-beta-D-Gal-(1-&gt;4)-beta-D-Glc-(1&lt;-&gt;1)-Cer(d18:1(4E)) + UDP + H(+). The catalysed reaction is a neolactoside nLc4Cer(d18:1(4E)) + UDP-N-acetyl-alpha-D-glucosamine = a neolactoside IV(3)-beta-GlcNAc-nLc4Cer(d18:1(4E)) + UDP + H(+). The protein operates within protein modification; protein glycosylation. In terms of biological role, beta-1,3-N-acetylglucosaminyltransferase that plays a key role in the synthesis of lacto- or neolacto-series carbohydrate chains on glycolipids. The chain is Lactosylceramide 1,3-N-acetyl-beta-D-glucosaminyltransferase A (b3gnt5a) from Danio rerio (Zebrafish).